We begin with the raw amino-acid sequence, 286 residues long: 4-diphosphocytidyl-2-C-methyl-D-erythritol kinase (286 aa).

The active site involves Lys11. 93–103 (PFGAGLGGGSS) provides a ligand contact to ATP. Asp135 is a catalytic residue.

The protein belongs to the GHMP kinase family. IspE subfamily.

The enzyme catalyses 4-CDP-2-C-methyl-D-erythritol + ATP = 4-CDP-2-C-methyl-D-erythritol 2-phosphate + ADP + H(+). It functions in the pathway isoprenoid biosynthesis; isopentenyl diphosphate biosynthesis via DXP pathway; isopentenyl diphosphate from 1-deoxy-D-xylulose 5-phosphate: step 3/6. In terms of biological role, catalyzes the phosphorylation of the position 2 hydroxy group of 4-diphosphocytidyl-2C-methyl-D-erythritol. The protein is 4-diphosphocytidyl-2-C-methyl-D-erythritol kinase of Chlorobaculum tepidum (strain ATCC 49652 / DSM 12025 / NBRC 103806 / TLS) (Chlorobium tepidum).